Reading from the N-terminus, the 245-residue chain is 1-acyl-sn-glycerol-3-phosphate acyltransferase (245 aa).

The residue at position 1 (methionine 1) is an N-formylmethionine. The HXXXXD motif motif lies at 73–78 (HQNNYD).

This sequence belongs to the 1-acyl-sn-glycerol-3-phosphate acyltransferase family.

The protein resides in the cell inner membrane. The catalysed reaction is a 1-acyl-sn-glycero-3-phosphate + an acyl-CoA = a 1,2-diacyl-sn-glycero-3-phosphate + CoA. It carries out the reaction a fatty acyl-[ACP] + a 1-acyl-sn-glycero-3-phosphate = a 1,2-diacyl-sn-glycero-3-phosphate + holo-[ACP]. It functions in the pathway phospholipid metabolism; CDP-diacylglycerol biosynthesis; CDP-diacylglycerol from sn-glycerol 3-phosphate: step 2/3. In terms of biological role, converts lysophosphatidic acid (LPA) into phosphatidic acid by incorporating an acyl moiety at the 2 position. This enzyme can utilize either acyl-CoA or acyl-ACP as the fatty acyl donor. This is 1-acyl-sn-glycerol-3-phosphate acyltransferase (plsC) from Escherichia coli (strain K12).